A 318-amino-acid polypeptide reads, in one-letter code: Extracellular metalloprotease AO090012001025 (318 aa).

The signal sequence occupies residues 1-23 (MSHFPTLHILILVIANLQIQCFA). N-linked (GlcNAc...) asparagine glycosylation is found at Asn106, Asn121, and Asn193. His229 provides a ligand contact to Zn(2+). Glu230 is a catalytic residue. His233 is a Zn(2+) binding site. Cys268 and Cys295 form a disulfide bridge.

This sequence belongs to the peptidase M43B family.

The protein resides in the secreted. Its function is as follows. Secreted metalloproteinase that allows assimilation of proteinaceous substrates. The polypeptide is Extracellular metalloprotease AO090012001025 (Aspergillus oryzae (strain ATCC 42149 / RIB 40) (Yellow koji mold)).